Here is a 760-residue protein sequence, read N- to C-terminus: MSTVEEDSDTVTVETVNSVTLTQDTEGNLILHCPQNEADEIDSEDSIEPPHKRLCLSSEDDQSIDDSTPCISVVALPLSENDQSFEVTMTATTEVADDEVTEGTVTQIQILQNEQLDEISPLGNEEVSAVSQAWFTTKEDKDSLTNKGHKWKQGMWSKEEIDILMNNIERYLKARGIKDATEIIFEMSKDERKDFYRTIAWGLNRPLFAVYRRVLRMYDDRNHVGKYTPEEIEKLKELRIKHGNDWATIGAALGRSASSVKDRCRLMKDTCNTGKWTEEEEKRLAEVVHELTSTEPGDIVTQGVSWAAVAERVGTRSEKQCRSKWLNYLNWKQSGGTEWTKEDEINLILRIAELDVADENDINWDLLAEGWSSVRSPQWLRSKWWTIKRQIANHKDVSFPVLIKGLKQLHENQKNNPTLLENKSGSGVPNSNTNSSVQHVQIRVARLEDNTAISSSPMAALQIPVQITHVSSADSPATVDSETITLNSGTLQTFEILPSFHLQPTGTPGTYLLQTSSSQGLPLTLTASPTVTLTAAAPASPEQIIVHALSPEHLLNTSDNVTVQCHTPRVIIQTVATEDITSSISQAELTVDSDIQSSDFPEPPDALEADTFPDEIHHPKMTVEPSFNDAHVSKFSDQNSTELMNSVMVRTEEEISDTDLKQEESPSDLASAYVTEGLESPTIEEQVDQTIDDETILIVPSPHGFIQASDVIDTESVLPLTTLTDPILQHHQEESNIIGSSLGSPVSEDSKDVEDLVNCH.

The interval 1–237 (MSTVEEDSDT…TPEEIEKLKE (237 aa)) is interaction with CCND2. Residues 87-170 (VTMTATTEVA…IDILMNNIER (84 aa)) form a required for transcriptional activation region. Residues 87–458 (VTMTATTEVA…DNTAISSSPM (372 aa)) form a required for DNA-binding region. The segment at 176–760 (GIKDATEIIF…KDVEDLVNCH (585 aa)) is interaction with CCND1, CCND2 and CCND3. The 39-residue stretch at 225 to 263 (GKYTPEEIEKLKELRIKHGNDWATIGAALGRSASSVKDR) folds into the Myb-like 1 domain. The region spanning 268–333 (KDTCNTGKWT…KWLNYLNWKQ (66 aa)) is the HTH myb-type domain. The segment at residues 306–329 (WAAVAERVGTRSEKQCRSKWLNYL) is a DNA-binding region (H-T-H motif). The 50-residue stretch at 339-388 (WTKEDEINLILRIAELDVADENDINWDLLAEGWSSVRSPQWLRSKWWTIK) folds into the Myb-like 2 domain. 2 disordered regions span residues 414–435 (KNNPTLLENKSGSGVPNSNTNS) and 738–760 (IGSSLGSPVSEDSKDVEDLVNCH). The interval 459–760 (AALQIPVQIT…KDVEDLVNCH (302 aa)) is required for transcriptional activation.

It belongs to the DMTF1 family. As to quaternary structure, interacts with the D-type cyclins CCND1, CCND2 and CCND3. Interaction with D-type cyclins may modulate transcriptional activation by this protein. Post-translationally, phosphorylated by the cyclin-D2/CDK4, cyclin-D3/CDK4 and cyclin-D2/CDK6 complexes and to a lesser extent by the cyclin-D1/CDK4 complex. As to expression, expressed at relatively low levels in colonic mucosa, ovary, peripheral leukocytes, prostate and small intestine, and at higher levels in spleen, testis and thymus. Expressed in multiple regions of the brain and CNS including amygdala, caudate, corpus callosum, hippocampus, substantia nigra and subthalamic nucleus. Isoform 1 is the predominant isoform in monocytes, macrophages and neutrophils, isoform 2 is most strongly expressed in peripheral blood leukocytes and quiescent CD34 positive cells, and isoform 3 is expressed at low levels in all hematopoietic cell types. Expression is frequently reduced in non-small-cell lung carcinomas (NSCLC) due to hemizygous gene deletion, strongly suggesting that this locus is haploinsufficient for tumor suppression. Loss of this locus frequently occurs in tumors which retain wild-type CDKN2A/ARF and p53/TP53 loci. Hemizygous gene deletion has also been observed in leukemic blasts from patients with abnormalities of the long arm of chromosome 7.

The protein localises to the nucleus. Its function is as follows. Transcriptional activator which activates the CDKN2A/ARF locus in response to Ras-Raf signaling, thereby promoting p53/TP53-dependent growth arrest. Binds to the consensus sequence 5'-CCCG[GT]ATGT-3'. Isoform 1 may cooperate with MYB to activate transcription of the ANPEP gene. Isoform 2 may antagonize transcriptional activation by isoform 1. This is Cyclin-D-binding Myb-like transcription factor 1 (DMTF1) from Homo sapiens (Human).